We begin with the raw amino-acid sequence, 921 residues long: 2-oxoadipate dehydrogenase complex component E1 (921 aa).

N6-succinyllysine occurs at positions 184 and 189. The interval 300–319 is disordered; it reads GKTRGRQQSREDGDYSPNGS. N6-succinyllysine is present on residues K801 and K819.

The protein belongs to the alpha-ketoglutarate dehydrogenase family. The 2-oxoadipate dehydrogenase complex is composed of OADH (2-oxoadipate dehydrogenase; E1a), DLST (dihydrolipoamide succinyltransferase; E2) and DLD (dihydrolipoamide dehydrogenase; E3). E1a functional unit is a dimer. Thiamine diphosphate serves as cofactor.

It localises to the mitochondrion. It catalyses the reaction N(6)-[(R)-lipoyl]-L-lysyl-[protein] + 2-oxoadipate + H(+) = N(6)-[(R)-S(8)-glutaryldihydrolipoyl]-L-lysyl-[protein] + CO2. Its pathway is amino-acid degradation. 2-oxoadipate dehydrogenase (E1a) component of the 2-oxoadipate dehydrogenase complex (OADHC). Participates in the first step, rate limiting for the overall conversion of 2-oxoadipate (alpha-ketoadipate) to glutaryl-CoA and CO(2) catalyzed by the whole OADHC. Catalyzes the irreversible decarboxylation of 2-oxoadipate via the thiamine diphosphate (ThDP) cofactor and subsequent transfer of the decarboxylated acyl intermediate on an oxidized dihydrolipoyl group that is covalently amidated to the E2 enzyme (dihydrolipoyllysine-residue succinyltransferase or DLST). Can catalyze the decarboxylation of 2-oxoglutarate in vitro, but at a much lower rate than 2-oxoadipate. Responsible for the last step of L-lysine, L-hydroxylysine and L-tryptophan catabolism with the common product being 2-oxoadipate. In Mus musculus (Mouse), this protein is 2-oxoadipate dehydrogenase complex component E1 (Dhtkd1).